A 417-amino-acid chain; its full sequence is Serine hydroxymethyltransferase (417 aa).

(6S)-5,6,7,8-tetrahydrofolate is bound by residues Leu120 and 124–126 (GHL). Lys229 bears the N6-(pyridoxal phosphate)lysine mark. 354 to 356 (SPF) contributes to the (6S)-5,6,7,8-tetrahydrofolate binding site.

It belongs to the SHMT family. In terms of assembly, homodimer. The cofactor is pyridoxal 5'-phosphate.

It is found in the cytoplasm. It carries out the reaction (6R)-5,10-methylene-5,6,7,8-tetrahydrofolate + glycine + H2O = (6S)-5,6,7,8-tetrahydrofolate + L-serine. It participates in one-carbon metabolism; tetrahydrofolate interconversion. Its pathway is amino-acid biosynthesis; glycine biosynthesis; glycine from L-serine: step 1/1. Functionally, catalyzes the reversible interconversion of serine and glycine with tetrahydrofolate (THF) serving as the one-carbon carrier. This reaction serves as the major source of one-carbon groups required for the biosynthesis of purines, thymidylate, methionine, and other important biomolecules. Also exhibits THF-independent aldolase activity toward beta-hydroxyamino acids, producing glycine and aldehydes, via a retro-aldol mechanism. The chain is Serine hydroxymethyltransferase from Acinetobacter baylyi (strain ATCC 33305 / BD413 / ADP1).